The primary structure comprises 392 residues: O-phospho-L-seryl-tRNA:Cys-tRNA synthase (392 aa).

Residues 85 to 86, Asn190, and 213 to 215 contribute to the pyridoxal 5'-phosphate site; these read AR and SGH. Lys216 carries the N6-(pyridoxal phosphate)lysine modification.

Belongs to the SepCysS family. As to quaternary structure, homodimer. Interacts with SepRS. Pyridoxal 5'-phosphate is required as a cofactor.

The catalysed reaction is O-phospho-L-seryl-tRNA(Cys) + hydrogen sulfide + H(+) = L-cysteinyl-tRNA(Cys) + phosphate. Functionally, converts O-phospho-L-seryl-tRNA(Cys) (Sep-tRNA(Cys)) to L-cysteinyl-tRNA(Cys) (Cys-tRNA(Cys)). This is O-phospho-L-seryl-tRNA:Cys-tRNA synthase from Methanoculleus marisnigri (strain ATCC 35101 / DSM 1498 / JR1).